The following is a 222-amino-acid chain: DNA mismatch repair protein MutH (222 aa).

The protein belongs to the MutH family.

The protein resides in the cytoplasm. Sequence-specific endonuclease that cleaves unmethylated GATC sequences. It is involved in DNA mismatch repair. This chain is DNA mismatch repair protein MutH, found in Pasteurella multocida (strain Pm70).